The chain runs to 608 residues: Isocitrate dehydrogenase kinase/phosphatase (608 aa).

ATP is bound by residues 327-333 (APGIKGL) and Lys348. Asp383 is an active-site residue.

The protein belongs to the AceK family.

Its subcellular location is the cytoplasm. The catalysed reaction is L-seryl-[isocitrate dehydrogenase] + ATP = O-phospho-L-seryl-[isocitrate dehydrogenase] + ADP + H(+). Bifunctional enzyme which can phosphorylate or dephosphorylate isocitrate dehydrogenase (IDH) on a specific serine residue. This is a regulatory mechanism which enables bacteria to bypass the Krebs cycle via the glyoxylate shunt in response to the source of carbon. When bacteria are grown on glucose, IDH is fully active and unphosphorylated, but when grown on acetate or ethanol, the activity of IDH declines drastically concomitant with its phosphorylation. The protein is Isocitrate dehydrogenase kinase/phosphatase of Burkholderia ambifaria (strain ATCC BAA-244 / DSM 16087 / CCUG 44356 / LMG 19182 / AMMD) (Burkholderia cepacia (strain AMMD)).